We begin with the raw amino-acid sequence, 422 residues long: Dihydrofolate synthase/folylpolyglutamate synthase (422 aa).

7,8-dihydropteroate is bound at residue 29–31; it reads DLG. ATP is bound at residue 59-62; it reads GKGT. A Mg(2+)-binding site is contributed by Ser83. Residue 122 to 125 coordinates 7,8-dihydropteroate; that stretch reads TYFE. A Mg(2+)-binding site is contributed by Glu146. 7,8-dihydropteroate is bound at residue 153–155; it reads LDA. His173 is a binding site for Mg(2+). Lys188 carries the N6-carboxylysine modification. Residues Asn257, Arg289, and Asp302 each coordinate ATP.

This sequence belongs to the folylpolyglutamate synthase family. In terms of assembly, monomer. The cofactor is Mg(2+).

The enzyme catalyses 7,8-dihydropteroate + L-glutamate + ATP = 7,8-dihydrofolate + ADP + phosphate + H(+). It catalyses the reaction (6S)-5,6,7,8-tetrahydrofolyl-(gamma-L-Glu)(n) + L-glutamate + ATP = (6S)-5,6,7,8-tetrahydrofolyl-(gamma-L-Glu)(n+1) + ADP + phosphate + H(+). The catalysed reaction is 10-formyltetrahydrofolyl-(gamma-L-Glu)(n) + L-glutamate + ATP = 10-formyltetrahydrofolyl-(gamma-L-Glu)(n+1) + ADP + phosphate + H(+). It carries out the reaction (6R)-5,10-methylenetetrahydrofolyl-(gamma-L-Glu)(n) + L-glutamate + ATP = (6R)-5,10-methylenetetrahydrofolyl-(gamma-L-Glu)(n+1) + ADP + phosphate + H(+). It participates in cofactor biosynthesis; tetrahydrofolate biosynthesis; 7,8-dihydrofolate from 2-amino-4-hydroxy-6-hydroxymethyl-7,8-dihydropteridine diphosphate and 4-aminobenzoate: step 2/2. The protein operates within cofactor biosynthesis; tetrahydrofolylpolyglutamate biosynthesis. In terms of biological role, functions in two distinct reactions of the de novo folate biosynthetic pathway. Catalyzes the addition of a glutamate residue to dihydropteroate (7,8-dihydropteroate or H2Pte) to form dihydrofolate (7,8-dihydrofolate monoglutamate or H2Pte-Glu). Also catalyzes successive additions of L-glutamate to tetrahydrofolate or 10-formyltetrahydrofolate or 5,10-methylenetetrahydrofolate, leading to folylpolyglutamate derivatives. The protein is Dihydrofolate synthase/folylpolyglutamate synthase of Escherichia coli (strain K12).